The sequence spans 521 residues: Glutamate--tRNA ligase (521 aa).

Residues 13–23 (PSPSGFLHVGG) carry the 'HIGH' region motif. A 'KMSKS' region motif is present at residues 253 to 257 (KLSKR). Position 256 (Lys-256) interacts with ATP.

This sequence belongs to the class-I aminoacyl-tRNA synthetase family. Glutamate--tRNA ligase type 1 subfamily. Monomer.

The protein resides in the cytoplasm. It catalyses the reaction tRNA(Glu) + L-glutamate + ATP = L-glutamyl-tRNA(Glu) + AMP + diphosphate. Catalyzes the attachment of glutamate to tRNA(Glu) in a two-step reaction: glutamate is first activated by ATP to form Glu-AMP and then transferred to the acceptor end of tRNA(Glu). The sequence is that of Glutamate--tRNA ligase from Leptospira interrogans serogroup Icterohaemorrhagiae serovar copenhageni (strain Fiocruz L1-130).